The following is a 241-amino-acid chain: MISVRRGLSQLWYWGKRGVIGIIALWMAGILIFAFLPVPFSMVMIERQLGAWLTGDFAYVAHSDWVPMDEISPYMALAVMAAEDQKFPDHWGFDVGAIESALSHNQRNQKRIRGASTLSQQTAKNVFLWDGRSWIRKGLEVGLTAGIELIWTKRRILTVYLNIAEFGNGIFGVEAAARHFFNKPASKLSASEAALLAAVLPNPLRFKVNAPSGYVISRQQWILRQMHQLGGKTFLQENTLD.

A helical transmembrane segment spans residues 18 to 38 (GVIGIIALWMAGILIFAFLPV).

The protein belongs to the glycosyltransferase 51 family.

The protein resides in the cell inner membrane. The catalysed reaction is [GlcNAc-(1-&gt;4)-Mur2Ac(oyl-L-Ala-gamma-D-Glu-L-Lys-D-Ala-D-Ala)](n)-di-trans,octa-cis-undecaprenyl diphosphate + beta-D-GlcNAc-(1-&gt;4)-Mur2Ac(oyl-L-Ala-gamma-D-Glu-L-Lys-D-Ala-D-Ala)-di-trans,octa-cis-undecaprenyl diphosphate = [GlcNAc-(1-&gt;4)-Mur2Ac(oyl-L-Ala-gamma-D-Glu-L-Lys-D-Ala-D-Ala)](n+1)-di-trans,octa-cis-undecaprenyl diphosphate + di-trans,octa-cis-undecaprenyl diphosphate + H(+). Its pathway is cell wall biogenesis; peptidoglycan biosynthesis. Peptidoglycan polymerase that catalyzes glycan chain elongation from lipid-linked precursors. This is Biosynthetic peptidoglycan transglycosylase from Yersinia pseudotuberculosis serotype O:3 (strain YPIII).